The sequence spans 481 residues: MSDPKLTKAVDSICDQFIVTKSKISQLTEYFIDCMEKGLEPCESDISQNKGLPMIPTFVTDKPSGQEHGVTMLAADLGGTNFRVCSVELLGNHEFKIEQEKSKIPTFFFQDDHHVTSKDLFQHMALITHQFLTKHHKDVIQDYKWKMGFTFSYPVDQTSLSSGKLIRWTKGFKIGDTVGQDVVQLFQQELNDIGLSNVHVVALTNDTTGTLLARCYASSDAARAINEPVIGCIFGTGTNGCYMEKLENIHKLDPASREELLSQGKTHMCINTEWGSFDNELNHLPTTSYDIKIDQQFSTNPGFHLFEKRVSGLYLGEILRNILLDLEKQELFDLKESVLKNNPFILTTETLSHIEIDTVENDLQDTRDALLKAADLETTFEERVLIQKLVRAISRRAAFLAAVPIAAILIKTNALNQSYHCQVEVGCDGSVVEHYPGFRSMMRHALALSPIGPEGERDVHLRISKDGSGVGAALCALHANY.

The Hexokinase domain occupies 4–477; sequence PKLTKAVDSI…SGVGAALCAL (474 aa). A hexokinase small subdomain region spans residues 64–204; that stretch reads SGQEHGVTML…LSNVHVVALT (141 aa). ATP is bound at residue lysine 101. The segment at 146–172 is glucose-binding; it reads KMGFTFSYPVDQTSLSSGKLIRWTKGF. Residues 205–466 are hexokinase large subdomain; sequence NDTTGTLLAR…RDVHLRISKD (262 aa). 466-471 is an ATP binding site; that stretch reads DGSGVG.

Belongs to the hexokinase family.

It catalyses the reaction D-glucose + ATP = D-glucose 6-phosphate + ADP + H(+). The enzyme catalyses a D-hexose + ATP = a D-hexose 6-phosphate + ADP + H(+). It carries out the reaction D-mannose + ATP = D-mannose 6-phosphate + ADP + H(+). It functions in the pathway carbohydrate metabolism; hexose metabolism. Its pathway is carbohydrate degradation; glycolysis; D-glyceraldehyde 3-phosphate and glycerone phosphate from D-glucose: step 1/4. Glukokinase specific for aldohexoses. Phosphorylates glucose and mannose, but not fructose. The protein is Glucokinase-1 (GLK1) of Kluyveromyces lactis (strain ATCC 8585 / CBS 2359 / DSM 70799 / NBRC 1267 / NRRL Y-1140 / WM37) (Yeast).